Reading from the N-terminus, the 316-residue chain is Glutathione synthetase (316 aa).

The ATP-grasp domain occupies 125–311 (KLFTAWFPEL…ITGMLMNAIE (187 aa)). 151–207 (HQKHGDVIFKPLDGMGGASIFRLKKDDPNVGVIIETLTEHGNRFCMAQNFLPAIKEG) is a binding site for ATP. 2 residues coordinate Mg(2+): Glu281 and Asn283.

This sequence belongs to the prokaryotic GSH synthase family. Mg(2+) is required as a cofactor. The cofactor is Mn(2+).

The catalysed reaction is gamma-L-glutamyl-L-cysteine + glycine + ATP = glutathione + ADP + phosphate + H(+). The protein operates within sulfur metabolism; glutathione biosynthesis; glutathione from L-cysteine and L-glutamate: step 2/2. The polypeptide is Glutathione synthetase (Photorhabdus laumondii subsp. laumondii (strain DSM 15139 / CIP 105565 / TT01) (Photorhabdus luminescens subsp. laumondii)).